The primary structure comprises 862 residues: FAS1 domain-containing protein YLR001C (862 aa).

A signal peptide spans 1-23 (MNMAIQTIKYIFWLLPILGLTQA). Over 24-762 (LLQNPGDDFP…KYHLRLPGIA (739 aa)) the chain is Vacuolar. The FAS1 1 domain occupies 34 to 162 (FSTVIDILSE…ASLQGINNLL (129 aa)). Asn-68, Asn-112, Asn-152, Asn-200, Asn-291, Asn-333, Asn-450, Asn-521, Asn-542, Asn-569, Asn-663, Asn-679, and Asn-688 each carry an N-linked (GlcNAc...) asparagine glycan. FAS1 domains follow at residues 463 to 604 (PGDL…DQLD) and 606 to 744 (PVDL…DKPI). The helical transmembrane segment at 763–783 (VGFGVIIGVTIAISLLFCIII) threads the bilayer. Residues 784 to 862 (TRGGKVKDKN…QKGGRSVSTS (79 aa)) are Cytoplasmic-facing.

It localises to the vacuole membrane. The polypeptide is FAS1 domain-containing protein YLR001C (Saccharomyces cerevisiae (strain ATCC 204508 / S288c) (Baker's yeast)).